A 1059-amino-acid chain; its full sequence is Carbamoyl phosphate synthase large chain (1059 aa).

A carboxyphosphate synthetic domain region spans residues 1–401 (MPKRKDIQKI…SLLKACRSLE (401 aa)). The ATP site is built by Arg129, Arg169, Gly175, Gly176, Arg208, Ile210, Glu215, Gly241, Ile242, His243, Gln284, and Glu298. The 195-residue stretch at 133 to 327 (KQLMEELGQP…IAKLAAKIAV (195 aa)) folds into the ATP-grasp 1 domain. Gln284, Glu298, and Asn300 together coordinate Mg(2+). Gln284, Glu298, and Asn300 together coordinate Mn(2+). The interval 402-546 (VGVDHNELPA…YSTYGFENES (145 aa)) is oligomerization domain. The segment at 547–929 (VKSSKESVLV…ALYKAFEASY (383 aa)) is carbamoyl phosphate synthetic domain. The region spanning 671–861 (EQALKELDIP…MAQVATRLIL (191 aa)) is the ATP-grasp 2 domain. Residues Arg707, Ser746, Ile748, Glu752, Gly777, Val778, His779, Ser780, Gln820, and Glu832 each contribute to the ATP site. Gln820, Glu832, and Asn834 together coordinate Mg(2+). 3 residues coordinate Mn(2+): Gln820, Glu832, and Asn834. The MGS-like domain occupies 930–1059 (LHLPNFGNVV…ESRSFTTEAI (130 aa)). The segment at 930-1059 (LHLPNFGNVV…ESRSFTTEAI (130 aa)) is allosteric domain.

Belongs to the CarB family. Composed of two chains; the small (or glutamine) chain promotes the hydrolysis of glutamine to ammonia, which is used by the large (or ammonia) chain to synthesize carbamoyl phosphate. Tetramer of heterodimers (alpha,beta)4. Requires Mg(2+) as cofactor. Mn(2+) serves as cofactor.

The catalysed reaction is hydrogencarbonate + L-glutamine + 2 ATP + H2O = carbamoyl phosphate + L-glutamate + 2 ADP + phosphate + 2 H(+). The enzyme catalyses hydrogencarbonate + NH4(+) + 2 ATP = carbamoyl phosphate + 2 ADP + phosphate + 2 H(+). The protein operates within amino-acid biosynthesis; L-arginine biosynthesis; carbamoyl phosphate from bicarbonate: step 1/1. It functions in the pathway pyrimidine metabolism; UMP biosynthesis via de novo pathway; (S)-dihydroorotate from bicarbonate: step 1/3. In terms of biological role, large subunit of the glutamine-dependent carbamoyl phosphate synthetase (CPSase). CPSase catalyzes the formation of carbamoyl phosphate from the ammonia moiety of glutamine, carbonate, and phosphate donated by ATP, constituting the first step of 2 biosynthetic pathways, one leading to arginine and/or urea and the other to pyrimidine nucleotides. The large subunit (synthetase) binds the substrates ammonia (free or transferred from glutamine from the small subunit), hydrogencarbonate and ATP and carries out an ATP-coupled ligase reaction, activating hydrogencarbonate by forming carboxy phosphate which reacts with ammonia to form carbamoyl phosphate. This is Carbamoyl phosphate synthase large chain from Streptococcus gordonii (strain Challis / ATCC 35105 / BCRC 15272 / CH1 / DL1 / V288).